The chain runs to 1987 residues: Transcription factor 20 (1987 aa).

Polar residues predominate over residues 1–22 (MQSFREQSSYHGNQQSYPQEVH). 5 disordered regions span residues 1-79 (MQSF…QGYQ), 96-432 (DTVA…GNVP), 446-481 (LSPT…DPGL), 502-816 (LLSD…GTAR), and 844-891 (PHWG…SLSE). Low complexity predominate over residues 51–74 (TGSSSSGRRGTAAAAAAMASETSG). At Arg59 the chain carries Omega-N-methylarginine. Polar residues predominate over residues 121–142 (QGSSFGNQYASEGHVSQFQAQH). A compositionally biased stretch (low complexity) spans 163 to 205 (SAQYQQQASSQQQQQQQQQQQQQQQQQQQQVQQLRQQLYQSHQ). Polar residues predominate over residues 206–235 (PLPQTTGQPASGSSHLQPMQRPSTLPSSAG). The span at 248–277 (QSSASSSSSSSFPSPQRFSQSGQSYDGSYS) shows a compositional bias: low complexity. The span at 289–311 (VGSNAQAYGTQSNYSYQPQSMKN) shows a compositional bias: polar residues. Residue Lys316 forms a Glycyl lysine isopeptide (Lys-Gly) (interchain with G-Cter in SUMO2) linkage. Positions 322–354 (QQGQQQQQQQPQPQQQQPQQQQQQQQQQQHPPQ) are enriched in low complexity. The segment covering 357 to 377 (MQYTNAATKMPLQSQVGQYNQ) has biased composition (polar residues). The span at 396–416 (SNPSPAASVVQSPSCSSTPSP) shows a compositional bias: low complexity. Residues 417-432 (LMQSGENLQCGQGNVP) are compositionally biased toward polar residues. Residues 446–456 (LSPTPSMMPSP) are compositionally biased toward low complexity. Phosphoserine is present on residues Ser447 and Ser458. Polar residues-rich tracts occupy residues 526 to 537 (SCTNSEGSSQPE), 566 to 576 (LSGQSTSSDTT), and 585 to 605 (AGSS…TSPA). Phosphoserine is present on residues Ser567, Ser588, Ser603, and Ser612. Residues 618-627 (TSLSSEGNTK) are compositionally biased toward polar residues. Residue Lys631 is modified to N6-acetyllysine. Positions 645-657 (RVEKSGGQDKGSQ) are enriched in basic and acidic residues. A compositionally biased stretch (polar residues) spans 666–682 (RPPSNSGVKEISHTSLP). The residue at position 669 (Ser669) is a Phosphoserine. Over residues 693–715 (GNKNGDNNSSNHNGEGNGPSSHS) the composition is skewed to low complexity. Polar residues predominate over residues 722 to 731 (TGRTEPSKSP). Residues Lys739, Lys762, Lys777, Lys852, Lys861, and Lys873 each participate in a glycyl lysine isopeptide (Lys-Gly) (interchain with G-Cter in SUMO2) cross-link. Residues 761–777 (EKGDFGSHGERKGRNEK) show a composition bias toward basic and acidic residues. A Phosphoserine modification is found at Ser900. Residues Lys949 and Lys951 each participate in a glycyl lysine isopeptide (Lys-Gly) (interchain with G-Cter in SUMO2) cross-link. The tract at residues 949 to 1065 (KLKSQSGQIK…GDPHHMNPHM (117 aa)) is disordered. A Glycyl lysine isopeptide (Lys-Gly) (interchain with G-Cter in SUMO1); alternate cross-link involves residue Lys958. Lys958 participates in a covalent cross-link: Glycyl lysine isopeptide (Lys-Gly) (interchain with G-Cter in SUMO2); alternate. The segment covering 974–989 (KSGDHCHPTSIKHETY) has biased composition (basic and acidic residues). A Glycyl lysine isopeptide (Lys-Gly) (interchain with G-Cter in SUMO2) cross-link involves residue Lys985. Ser994 and Ser1033 each carry phosphoserine. Lys1043 participates in a covalent cross-link: Glycyl lysine isopeptide (Lys-Gly) (interchain with G-Cter in SUMO2). Position 1052 is an omega-N-methylarginine (Arg1052). A Phosphoserine modification is found at Ser1081. Residues Lys1114, Lys1126, Lys1165, Lys1201, Lys1206, Lys1211, Lys1238, Lys1259, Lys1295, and Lys1302 each participate in a glycyl lysine isopeptide (Lys-Gly) (interchain with G-Cter in SUMO2) cross-link. The disordered stretch occupies residues 1136–1372 (VIAAAQHRQE…SPAKTKILPP (237 aa)). The span at 1158 to 1170 (DRVRSPLKNDKDG) shows a compositional bias: basic and acidic residues. The tract at residues 1198-1219 (LPAKSMELKHSSQKLQESCWDL) is leucine-zipper. Residues 1282 to 1295 (RRRVRSFISPIPSK) carry the Nuclear localization signal motif. 2 stretches are compositionally biased toward basic and acidic residues: residues 1305–1321 (NADD…EGAD) and 1332–1346 (HSQD…DSSK). Ser1333 bears the Phosphoserine mark. Lys1337 participates in a covalent cross-link: Glycyl lysine isopeptide (Lys-Gly) (interchain with G-Cter in SUMO2). At Ser1363 the chain carries Phosphoserine. Lys1366 is covalently cross-linked (Glycyl lysine isopeptide (Lys-Gly) (interchain with G-Cter in SUMO2)). Ser1389 is modified (phosphoserine). The disordered stretch occupies residues 1415-1434 (SLKSGPPEGGTVATQEAEME). Residues Lys1417, Lys1437, Lys1456, and Lys1474 each participate in a glycyl lysine isopeptide (Lys-Gly) (interchain with G-Cter in SUMO2) cross-link. The disordered stretch occupies residues 1446–1636 (SVTNQESNVE…KQAVPIVEPQ (191 aa)). Positions 1463–1479 (EEWRGSGDDKVKTEAHV) are enriched in basic and acidic residues. The span at 1481–1501 (TASTGKEPSGTMTSTASQKPG) shows a compositional bias: polar residues. Lys1538 is covalently cross-linked (Glycyl lysine isopeptide (Lys-Gly) (interchain with G-Cter in SUMO2)). Ser1550 carries the post-translational modification Phosphoserine. A Glycyl lysine isopeptide (Lys-Gly) (interchain with G-Cter in SUMO2) cross-link involves residue Lys1552. The a.T hook DNA-binding region spans 1565–1579 (GKKKGRPIGSVNKQK). Positions 1584 to 1594 (QPPPPPQPPQM) are enriched in pro residues. The Nuclear localization signal signature appears at 1604–1628 (KPKKQRQRRERRKPGAQPRKRKTKQ). Residues 1606-1627 (KKQRQRRERRKPGAQPRKRKTK) are compositionally biased toward basic residues. Lys1641 is covalently cross-linked (Glycyl lysine isopeptide (Lys-Gly) (interchain with G-Cter in SUMO2)). Disordered stretches follow at residues 1685 to 1710 (QTKL…SKVL) and 1760 to 1865 (TLPK…GPEL). Ser1697 carries the phosphoserine modification. A phosphothreonine mark is found at Thr1699, Thr1790, and Thr1792. The Nuclear localization signal signature appears at 1812–1819 (RFKRRHRS). The span at 1850-1859 (DTKPSVPTTS) shows a compositional bias: polar residues. Residues 1856-1892 (PTTSEGGPELELQIPELPLDSNEFWVHEGCILWANGI) form a C2HC pre-PHD-type; degenerate zinc finger. Residues 1912–1960 (MKCSHCQEAGATLGCYNKGCSFRYHYPCAIDADCLLHEENFSVRCPKHK) form a PHD-type zinc finger. Residues 1966–1987 (PLPPLQNKTAKGSLSTEQSERG) are disordered. The segment covering 1971-1987 (QNKTAKGSLSTEQSERG) has biased composition (polar residues).

Homodimer. Interacts with RNF4 and JUN. Binds to the regulatory region of MMP3. As to expression, expressed in brain, lung, liver, kidney and testes.

It localises to the nucleus. Functionally, transcriptional activator that binds to the regulatory region of MMP3 and thereby controls stromelysin expression. It stimulates the activity of various transcriptional activators such as JUN, SP1, PAX6 and ETS1, suggesting a function as a coactivator. The polypeptide is Transcription factor 20 (Tcf20) (Mus musculus (Mouse)).